A 224-amino-acid chain; its full sequence is Peroxiredoxin-6 (224 aa).

The 165-residue stretch at 4-168 folds into the Thioredoxin domain; the sequence is LLLGDEAPNF…ILRVVDSLQL (165 aa). A required and sufficient for targeting to lysosomes and lamellar bodies region spans residues 30–39; sequence DSWGILFSHP. The active-site Cysteine sulfenic acid (-SOH) intermediate; for peroxidase activity is C46. Y88 bears the Phosphotyrosine mark. Catalysis depends on D139, which acts as the For phospholipase activity. Phosphothreonine; by MAPK is present on T176.

It belongs to the peroxiredoxin family. Prx6 subfamily. In terms of assembly, homodimer. Interacts with GSTP1; mediates PRDX6 glutathionylation and regeneration. Irreversibly inactivated by overoxidation of Cys-46 to sulfinic acid (Cys-SO(2)H) and sulfonic acid (Cys-SO(3)H) forms upon oxidative stress. In terms of processing, phosphorylation at Thr-176 by MAP kinases increases the phospholipase activity of the enzyme. The phosphorylated form exhibits a greater lysophosphatidylcholine acyltransferase activity compared to the non-phosphorylated form.

It is found in the cytoplasm. The protein resides in the lysosome. It catalyses the reaction a hydroperoxide + 2 glutathione = an alcohol + glutathione disulfide + H2O. The enzyme catalyses a 1,2-diacyl-sn-glycero-3-phosphocholine + H2O = a 1-acyl-sn-glycero-3-phosphocholine + a fatty acid + H(+). The catalysed reaction is a 1-acyl-sn-glycero-3-phosphocholine + an acyl-CoA = a 1,2-diacyl-sn-glycero-3-phosphocholine + CoA. It carries out the reaction 1-hexadecanoyl-sn-glycero-3-phosphocholine + hexadecanoyl-CoA = 1,2-dihexadecanoyl-sn-glycero-3-phosphocholine + CoA. It catalyses the reaction 1,2-dihexadecanoyl-sn-glycero-3-phosphocholine + H2O = 1-hexadecanoyl-sn-glycero-3-phosphocholine + hexadecanoate + H(+). Thiol-specific peroxidase that catalyzes the reduction of hydrogen peroxide and organic hydroperoxides to water and alcohols, respectively. Can reduce H(2)O(2) and short chain organic, fatty acid, and phospholipid hydroperoxides. Also has phospholipase activity, and can therefore either reduce the oxidized sn-2 fatty acyl group of phospholipids (peroxidase activity) or hydrolyze the sn-2 ester bond of phospholipids (phospholipase activity). These activities are dependent on binding to phospholipids at acidic pH and to oxidized phospholipds at cytosolic pH. Plays a role in cell protection against oxidative stress by detoxifying peroxides and in phospholipid homeostasis. Exhibits acyl-CoA-dependent lysophospholipid acyltransferase which mediates the conversion of lysophosphatidylcholine (1-acyl-sn-glycero-3-phosphocholine or LPC) into phosphatidylcholine (1,2-diacyl-sn-glycero-3-phosphocholine or PC). Shows a clear preference for LPC as the lysophospholipid and for palmitoyl CoA as the fatty acyl substrate. The sequence is that of Peroxiredoxin-6 (PRDX6) from Gallus gallus (Chicken).